The chain runs to 688 residues: DNA ligase (688 aa).

Residues 42 to 46 (DAEYD), 91 to 92 (SL), and Glu-128 each bind NAD(+). Lys-130 serves as the catalytic N6-AMP-lysine intermediate. 4 residues coordinate NAD(+): Arg-151, Glu-188, Lys-305, and Lys-329. The Zn(2+) site is built by Cys-423, Cys-426, Cys-441, and Cys-447. Residues 608–688 (APQGVLAGKT…GMRKLLEGQL (81 aa)) enclose the BRCT domain.

It belongs to the NAD-dependent DNA ligase family. LigA subfamily. It depends on Mg(2+) as a cofactor. Mn(2+) serves as cofactor.

The catalysed reaction is NAD(+) + (deoxyribonucleotide)n-3'-hydroxyl + 5'-phospho-(deoxyribonucleotide)m = (deoxyribonucleotide)n+m + AMP + beta-nicotinamide D-nucleotide.. DNA ligase that catalyzes the formation of phosphodiester linkages between 5'-phosphoryl and 3'-hydroxyl groups in double-stranded DNA using NAD as a coenzyme and as the energy source for the reaction. It is essential for DNA replication and repair of damaged DNA. The chain is DNA ligase from Paraburkholderia phytofirmans (strain DSM 17436 / LMG 22146 / PsJN) (Burkholderia phytofirmans).